A 477-amino-acid chain; its full sequence is Pentatricopeptide repeat-containing protein At5g47360 (477 aa).

9 PPR repeats span residues 129–163, 164–198, 199–233, 234–264, 273–307, 308–343, 344–378, 379–413, and 416–450; these read NVKT…NVCA, DTVA…GLYP, DVIT…DCVL, NSVT…MEKE, NAVT…GCMP, NRVT…GGVS, LSEC…GVRP, DGLA…DVKS, and DSDI…KMRL.

Belongs to the PPR family. P subfamily.

This is Pentatricopeptide repeat-containing protein At5g47360 from Arabidopsis thaliana (Mouse-ear cress).